The following is a 325-amino-acid chain: MSKRIYSRIAGTGSYLPEKVLTNDDMSKIVDTSDEWIRSRTGIRERHIVADDQTTSDLAYFASLKAMEAAGVTADEIDLIVVGTTTPDLIFPSTACLLQARLGNVGCGAFDVNAACSGFVYALSVADKFVRSGDAKTVLVVGAETLTRIVDWTDRTTCVLFGDGAGAVVLKADEDTGILSTHLHADGSKKELLWDPVGVSVGFGEGKNGGGALLMKGNDVFKYAVKALDSVVDETLAANGLDTHDLDWLIPHQANLRIIEATAKRLDLPMEQVVVTVDRHGNTSSASVPLALDEAVRSGRVQRGQLLLLEAFGGGFTWGSALLRY.

Catalysis depends on residues Cys-116 and His-252. Residues 253 to 257 form an ACP-binding region; sequence QANLR. Asn-282 is a catalytic residue.

It belongs to the thiolase-like superfamily. FabH family. In terms of assembly, homodimer.

Its subcellular location is the cytoplasm. It catalyses the reaction malonyl-[ACP] + acetyl-CoA + H(+) = 3-oxobutanoyl-[ACP] + CO2 + CoA. It participates in lipid metabolism; fatty acid biosynthesis. Functionally, catalyzes the condensation reaction of fatty acid synthesis by the addition to an acyl acceptor of two carbons from malonyl-ACP. Catalyzes the first condensation reaction which initiates fatty acid synthesis and may therefore play a role in governing the total rate of fatty acid production. Possesses both acetoacetyl-ACP synthase and acetyl transacylase activities. Its substrate specificity determines the biosynthesis of branched-chain and/or straight-chain of fatty acids. The protein is Beta-ketoacyl-[acyl-carrier-protein] synthase III of Xanthomonas campestris pv. campestris (strain ATCC 33913 / DSM 3586 / NCPPB 528 / LMG 568 / P 25).